The chain runs to 226 residues: CD9 antigen (226 aa).

Over 1-12 the chain is Cytoplasmic; the sequence is MPVKGGTKCIKY. A lipid anchor (S-palmitoyl cysteine) is attached at C9. Residues 13-33 traverse the membrane as a helical segment; sequence LLFGFNFIFWLAGIAVLAVGL. Topologically, residues 34 to 53 are extracellular; sequence WLRFDSQTKSIFEQDSQPSS. The helical transmembrane segment at 54–74 threads the bilayer; sequence FYTGVYILIGAGALMMLVGFL. Residues 75 to 85 lie on the Cytoplasmic side of the membrane; the sequence is GCCGAVQESQC. S-palmitoyl cysteine attachment occurs at residues C76, C77, and C85. Residues 86–109 traverse the membrane as a helical segment; sequence MLGLFFGFLLVIFAIEIAAAIWGY. Residues 110–193 lie on the Extracellular side of the membrane; the sequence is SHKDEVIQEV…KEVFHNKFHI (84 aa). 2 cysteine pairs are disulfide-bonded: C150–C179 and C151–C165. Residues 194 to 219 traverse the membrane as a helical segment; sequence IGAVGIGIAVVMIFGMIFSMILCCAI. 2 S-palmitoyl cysteine lipidation sites follow: C216 and C217. The Cytoplasmic portion of the chain corresponds to 220-226; it reads RRSREMV.

The protein belongs to the tetraspanin (TM4SF) family. In terms of assembly, forms both disulfide-linked homodimers and higher homooligomers as well as heterooligomers with other members of the tetraspanin family. Interacts (via the second extracellular domain) with integrin ITGAV:ITGB3. Interacts with integrin ITGA6:ITGB1; interaction takes place in oocytes and is involved in sperm-egg fusion. Part of integrin-tetraspanin complexes composed of CD81, beta-1 and beta-2 integrins in the membrane of monocyte/macrophages. Interacts with CD63; identified in a complex with CD63 and ITGB3. Associates with CR2/CD21 and with PTGFRN/CD9P1. Part of a complex composed of CD9, CD81, PTGFRN and IGSF8. Interacts directly with IGSF8. Interacts with PDPN; this interaction is homophilic and attenuates platelet aggregation and pulmonary metastasis induced by PDPN. Interacts (on T cell side) with CD81 at immunological synapses between antigen-presenting cells and T cells. In terms of processing, palmitoylated at a low, basal level in unstimulated platelets. The level of palmitoylation increases when platelets are activated by thrombin (in vitro). The protein exists in three forms with molecular masses between 22 and 27 kDa, and is known to carry covalently linked fatty acids. Palmitoylation by ZDHHC2 regulates CD9 expression, association with other tetraspanin family proteins and function in cell adhesion.

The protein localises to the cell membrane. It localises to the membrane. It is found in the secreted. The protein resides in the extracellular exosome. Integral membrane protein associated with integrins, which regulates different processes, such as sperm-egg fusion, platelet activation and aggregation, and cell adhesion. Present at the cell surface of oocytes and plays a key role in sperm-egg fusion, possibly by organizing multiprotein complexes and the morphology of the membrane required for the fusion. In myoblasts, associates with CD81 and PTGFRN and inhibits myotube fusion during muscle regeneration. In macrophages, associates with CD81 and beta-1 and beta-2 integrins, and prevents macrophage fusion into multinucleated giant cells specialized in ingesting complement-opsonized large particles. Also prevents the fusion between mononuclear cell progenitors into osteoclasts in charge of bone resorption. Acts as a receptor for PSG17. Involved in platelet activation and aggregation. Regulates paranodal junction formation. Involved in cell adhesion, cell motility and tumor metastasis. The protein is CD9 antigen of Felis catus (Cat).